The sequence spans 608 residues: Threonine--tRNA ligase (608 aa).

Positions 1-143 (MRVLYIHAER…SFKPEEGRAD (143 aa)) are editing domain. Catalytic regions lie at residues 194–490 (PKYL…PRLP) and 195–490 (KYLE…PRLP). Residues Cys287, His338, and His459 each coordinate Zn(2+).

The protein belongs to the class-II aminoacyl-tRNA synthetase family. As to quaternary structure, homodimer. Requires Zn(2+) as cofactor.

It is found in the cytoplasm. It catalyses the reaction tRNA(Thr) + L-threonine + ATP = L-threonyl-tRNA(Thr) + AMP + diphosphate + H(+). Its function is as follows. Catalyzes the attachment of threonine to tRNA(Thr) in a two-step reaction: L-threonine is first activated by ATP to form Thr-AMP and then transferred to the acceptor end of tRNA(Thr). Also edits incorrectly charged L-seryl-tRNA(Thr). The protein is Threonine--tRNA ligase of Pyrobaculum aerophilum (strain ATCC 51768 / DSM 7523 / JCM 9630 / CIP 104966 / NBRC 100827 / IM2).